An 86-amino-acid polypeptide reads, in one-letter code: Large ribosomal subunit protein uL23 (86 aa).

This sequence belongs to the universal ribosomal protein uL23 family. Part of the 50S ribosomal subunit. Contacts protein L29.

In terms of biological role, binds to 23S rRNA. One of the proteins that surrounds the polypeptide exit tunnel on the outside of the ribosome. The polypeptide is Large ribosomal subunit protein uL23 (Methanosphaera stadtmanae (strain ATCC 43021 / DSM 3091 / JCM 11832 / MCB-3)).